A 261-amino-acid chain; its full sequence is MIIADNIKQFHSIRNSLIKQQKIGFVPTMGALHNGHISLIKKAKSENDVVIVSIFVNPTQFNNPNDYQTYPNQLQQDIQILASLDVDVLFNPSEKDIYPDGNLLRIEPKLEIANILEGKSRPGHFSGTLTVVLKLLQITKPNNLYLGEKDYQQVMLIKQLVKDFFINTKIIVCPTQRQPSGLPLSSRNKNLTSTDIEIANKIYEILRQDDFSNLEELTNKINSTGAKLQYIQKLNNRIFLAFYIGKVRLIDNFLKETGPSC.

29–36 (MGALHNGH) serves as a coordination point for ATP. The Proton donor role is filled by histidine 36. Residue glutamine 60 coordinates (R)-pantoate. Residue glutamine 60 participates in beta-alanine binding. 147–150 (GEKD) is an ATP binding site. Glutamine 153 serves as a coordination point for (R)-pantoate. ATP is bound at residue 184 to 187 (LSSR).

It belongs to the pantothenate synthetase family. As to quaternary structure, homodimer.

It localises to the cytoplasm. It carries out the reaction (R)-pantoate + beta-alanine + ATP = (R)-pantothenate + AMP + diphosphate + H(+). It functions in the pathway cofactor biosynthesis; (R)-pantothenate biosynthesis; (R)-pantothenate from (R)-pantoate and beta-alanine: step 1/1. In terms of biological role, catalyzes the condensation of pantoate with beta-alanine in an ATP-dependent reaction via a pantoyl-adenylate intermediate. This chain is Pantothenate synthetase, found in Francisella tularensis subsp. holarctica (strain FTNF002-00 / FTA).